Here is a 393-residue protein sequence, read N- to C-terminus: Lysophosphatidic acid receptor 1 (393 aa).

The Extracellular segment spans residues 1 to 50 (MAAASTSSPVVSQPQFTAMNEPQCFYNESIAFFYNRSGKYLATEWNTVSK). 2 cysteine pairs are disulfide-bonded: Cys-24–Cys-190 and Cys-188–Cys-195. N-linked (GlcNAc...) asparagine glycosylation is found at Asn-27 and Asn-35. Lys-39 is a binding site for a 1-acyl-sn-glycero-3-phosphate. A helical membrane pass occupies residues 51-75 (LVMGLGITVCIFIMLANLLVMVAIY). Topologically, residues 76-83 (VNRRFHFP) are cytoplasmic. The chain crosses the membrane as a helical span at residues 84–107 (IYYLMANLAAADFFAGLAYFYLMF). Residues 108-121 (NTGPNTRRLTVSTW) are Extracellular-facing. Residues 122-144 (LLRQGLIDTTVTASVANLLAIAI) form a helical membrane-spanning segment. 124-129 (RQGLID) is an a 1-acyl-sn-glycero-3-phosphate binding site. The Cytoplasmic segment spans residues 145 to 163 (ERHITVFRMQLHTRMSNRR). The chain crosses the membrane as a helical span at residues 164–184 (VVVVIVVIWTMAIVMGAIPSV). Residues 185-204 (GWNCICDIENCSNMAPLYSD) are Extracellular-facing. The chain crosses the membrane as a helical span at residues 205–225 (SYLVFWAIFNLVTFVVMVVLY). Residue Trp-210 participates in a 1-acyl-sn-glycero-3-phosphate binding. The Cytoplasmic portion of the chain corresponds to 226-255 (AHIFGYVRQRTMRMSRHSSGPRRNRDTMMS). Residues 256–280 (LLKTVVIVLGAFIICWTPGLVLLLL) traverse the membrane as a helical segment. The Extracellular segment spans residues 281–294 (DVCCPQCDVLAYEK). A disulfide bridge connects residues Cys-284 and Cys-287. Residues 295–315 (FFLLLAEFNSAMNPIIYSYRD) form a helical membrane-spanning segment. Over 316 to 393 (KEMSATFRQI…PPERPGQGRV (78 aa)) the chain is Cytoplasmic. Phosphoserine is present on Ser-341. Thr-351 carries the phosphothreonine modification. A compositionally biased stretch (basic and acidic residues) spans 369 to 381 (KMRGGHHLLRDEQ). The segment at 369-393 (KMRGGHHLLRDEQPPPPERPGQGRV) is disordered.

Belongs to the G-protein coupled receptor 1 family. As to quaternary structure, interacts with RALA and GRK2. Interacts with GNAQ and GNA13. Interacts with CD14; the interaction is enhanced by exposure to bacterial lipopolysaccharide (LPS). N-glycosylated. As to expression, detected in brain cortex and in pituitary pars tuberalis.

It is found in the cell surface. The protein localises to the cell membrane. Its subcellular location is the endosome. Its function is as follows. Receptor for lysophosphatidic acid (LPA). Plays a role in the reorganization of the actin cytoskeleton, cell migration, differentiation and proliferation, and thereby contributes to the responses to tissue damage and infectious agents. Activates downstream signaling cascades via the G(i)/G(o), G(12)/G(13), and G(q) families of heteromeric G proteins. Signaling inhibits adenylyl cyclase activity and decreases cellular cAMP levels. Signaling triggers an increase of cytoplasmic Ca(2+) levels. Activates RALA; this leads to the activation of phospholipase C (PLC) and the formation of inositol 1,4,5-trisphosphate. Signaling mediates activation of down-stream MAP kinases. Contributes to the regulation of cell shape. Promotes Rho-dependent reorganization of the actin cytoskeleton in neuronal cells and neurite retraction. Promotes the activation of Rho and the formation of actin stress fibers. Promotes formation of lamellipodia at the leading edge of migrating cells via activation of RAC1. Through its function as LPA receptor, plays a role in chemotaxis and cell migration, including responses to injury and wounding. Plays a role in triggering inflammation in response to bacterial lipopolysaccharide (LPS) via its interaction with CD14. Promotes cell proliferation in response to LPA. Inhibits the intracellular ciliogenesis pathway in response to LPA and through AKT1 activation. Required for normal skeleton development. May play a role in osteoblast differentiation. Required for normal brain development. Required for normal proliferation, survival and maturation of newly formed neurons in the adult dentate gyrus. Plays a role in pain perception and in the initiation of neuropathic pain. The protein is Lysophosphatidic acid receptor 1 (LPAR1) of Ovis aries (Sheep).